We begin with the raw amino-acid sequence, 379 residues long: DNA replication and repair protein RecF (379 aa).

Residue 30–37 participates in ATP binding; sequence GDNAQGKS.

Belongs to the RecF family.

Its subcellular location is the cytoplasm. Its function is as follows. The RecF protein is involved in DNA metabolism; it is required for DNA replication and normal SOS inducibility. RecF binds preferentially to single-stranded, linear DNA. It also seems to bind ATP. The protein is DNA replication and repair protein RecF of Thermosynechococcus vestitus (strain NIES-2133 / IAM M-273 / BP-1).